The chain runs to 472 residues: Siroheme synthase 1 (472 aa).

A precorrin-2 dehydrogenase /sirohydrochlorin ferrochelatase region spans residues 1–203 (MDYLPLFADL…GQLAQAEEEL (203 aa)). NAD(+) contacts are provided by residues 22-23 (EV) and 43-44 (QT). At serine 128 the chain carries Phosphoserine. Residues 215–472 (GEVALVGAGP…AISPSVVNLA (258 aa)) are uroporphyrinogen-III C-methyltransferase. Proline 224 provides a ligand contact to S-adenosyl-L-methionine. Residue aspartate 247 is the Proton acceptor of the active site. The active-site Proton donor is the lysine 269. Residues 300-302 (GGD), isoleucine 305, 330-331 (TA), methionine 382, and glycine 411 contribute to the S-adenosyl-L-methionine site.

The protein in the N-terminal section; belongs to the precorrin-2 dehydrogenase / sirohydrochlorin ferrochelatase family. This sequence in the C-terminal section; belongs to the precorrin methyltransferase family.

It carries out the reaction uroporphyrinogen III + 2 S-adenosyl-L-methionine = precorrin-2 + 2 S-adenosyl-L-homocysteine + H(+). The catalysed reaction is precorrin-2 + NAD(+) = sirohydrochlorin + NADH + 2 H(+). The enzyme catalyses siroheme + 2 H(+) = sirohydrochlorin + Fe(2+). Its pathway is cofactor biosynthesis; adenosylcobalamin biosynthesis; precorrin-2 from uroporphyrinogen III: step 1/1. It functions in the pathway cofactor biosynthesis; adenosylcobalamin biosynthesis; sirohydrochlorin from precorrin-2: step 1/1. It participates in porphyrin-containing compound metabolism; siroheme biosynthesis; precorrin-2 from uroporphyrinogen III: step 1/1. The protein operates within porphyrin-containing compound metabolism; siroheme biosynthesis; siroheme from sirohydrochlorin: step 1/1. Its pathway is porphyrin-containing compound metabolism; siroheme biosynthesis; sirohydrochlorin from precorrin-2: step 1/1. In terms of biological role, multifunctional enzyme that catalyzes the SAM-dependent methylations of uroporphyrinogen III at position C-2 and C-7 to form precorrin-2 via precorrin-1. Then it catalyzes the NAD-dependent ring dehydrogenation of precorrin-2 to yield sirohydrochlorin. Finally, it catalyzes the ferrochelation of sirohydrochlorin to yield siroheme. This Yersinia enterocolitica serotype O:8 / biotype 1B (strain NCTC 13174 / 8081) protein is Siroheme synthase 1.